Here is a 201-residue protein sequence, read N- to C-terminus: Small ribosomal subunit protein uS4 (201 aa).

Residues 93 to 155 (CRLDNIVYRM…SKSLSMFEVN (63 aa)) form the S4 RNA-binding domain.

It belongs to the universal ribosomal protein uS4 family. In terms of assembly, part of the 30S ribosomal subunit. Contacts protein S5. The interaction surface between S4 and S5 is involved in control of translational fidelity.

Its function is as follows. One of the primary rRNA binding proteins, it binds directly to 16S rRNA where it nucleates assembly of the body of the 30S subunit. With S5 and S12 plays an important role in translational accuracy. In Elusimicrobium minutum (strain Pei191), this protein is Small ribosomal subunit protein uS4.